The following is a 340-amino-acid chain: Ferrochelatase (340 aa).

Residues His202 and Glu283 each coordinate Fe cation.

The protein belongs to the ferrochelatase family.

The protein resides in the cytoplasm. The catalysed reaction is heme b + 2 H(+) = protoporphyrin IX + Fe(2+). The protein operates within porphyrin-containing compound metabolism; protoheme biosynthesis; protoheme from protoporphyrin-IX: step 1/1. Its function is as follows. Catalyzes the ferrous insertion into protoporphyrin IX. The sequence is that of Ferrochelatase from Acinetobacter baylyi (strain ATCC 33305 / BD413 / ADP1).